Consider the following 382-residue polypeptide: Dual-specificity RNA methyltransferase RlmN (382 aa).

Glutamate 96 serves as the catalytic Proton acceptor. In terms of domain architecture, Radical SAM core spans 102-342 (QGGRGTLCVS…VRTTRGEDID (241 aa)). Cysteine 109 and cysteine 345 form a disulfide bridge. [4Fe-4S] cluster contacts are provided by cysteine 116, cysteine 120, and cysteine 123. Residues 170-171 (GE), serine 202, 224-226 (SLH), and asparagine 302 each bind S-adenosyl-L-methionine. The active-site S-methylcysteine intermediate is cysteine 345.

The protein belongs to the radical SAM superfamily. RlmN family. [4Fe-4S] cluster serves as cofactor.

Its subcellular location is the cytoplasm. It carries out the reaction adenosine(2503) in 23S rRNA + 2 reduced [2Fe-2S]-[ferredoxin] + 2 S-adenosyl-L-methionine = 2-methyladenosine(2503) in 23S rRNA + 5'-deoxyadenosine + L-methionine + 2 oxidized [2Fe-2S]-[ferredoxin] + S-adenosyl-L-homocysteine. The enzyme catalyses adenosine(37) in tRNA + 2 reduced [2Fe-2S]-[ferredoxin] + 2 S-adenosyl-L-methionine = 2-methyladenosine(37) in tRNA + 5'-deoxyadenosine + L-methionine + 2 oxidized [2Fe-2S]-[ferredoxin] + S-adenosyl-L-homocysteine. Specifically methylates position 2 of adenine 2503 in 23S rRNA and position 2 of adenine 37 in tRNAs. m2A2503 modification seems to play a crucial role in the proofreading step occurring at the peptidyl transferase center and thus would serve to optimize ribosomal fidelity. The chain is Dual-specificity RNA methyltransferase RlmN from Stutzerimonas stutzeri (strain A1501) (Pseudomonas stutzeri).